The chain runs to 345 residues: MKEIKTMEFRDGVLYLIDQRKLPLSYEFFECRTYQDVDFAIKDMVVRGAPAIGAAAAYGVVLAAQQFMKEEKENFLKNMENALNVLSKSRPTAVNLTWAIGRMRGVLEKVKDLSVSDIYEALKEEANKIYFEDLETNKKMAKIGNEVIKPNAVILTHCNTGALATVGYGTALGVIREAHYSGKNIFVYADETRPRLQGAKLTAWELVQEGIPAKLIADSVAATLIRDGKIDIILVGADRIALNGDTANKIGTFMLSVVAKVYNVPFYVVAPTSTIDFNIETGAEIVIEERSPEEVTHINGVRIAPEGIDVYNPAFDVTPHENITGIITEKGIIRPPFRENILKLR.

Residues Arg47–Ala49, Arg90, and Gln197 each bind substrate. Asp238 serves as the catalytic Proton donor. Asn248 to Lys249 contacts substrate.

This sequence belongs to the eIF-2B alpha/beta/delta subunits family. MtnA subfamily.

The enzyme catalyses 5-(methylsulfanyl)-alpha-D-ribose 1-phosphate = 5-(methylsulfanyl)-D-ribulose 1-phosphate. The protein operates within amino-acid biosynthesis; L-methionine biosynthesis via salvage pathway; L-methionine from S-methyl-5-thio-alpha-D-ribose 1-phosphate: step 1/6. Functionally, catalyzes the interconversion of methylthioribose-1-phosphate (MTR-1-P) into methylthioribulose-1-phosphate (MTRu-1-P). In Caldanaerobacter subterraneus subsp. tengcongensis (strain DSM 15242 / JCM 11007 / NBRC 100824 / MB4) (Thermoanaerobacter tengcongensis), this protein is Methylthioribose-1-phosphate isomerase.